Reading from the N-terminus, the 150-residue chain is MNIEVEMKVLDERMADVVPVYATKGSAGLDLRACLDEEVVLQPGETFLVPTGLAIYLADPSYAAVLLPRSGLGHKHGIVLGNLVGLIDSDYQGELKVSLWNRSSEPFTVKPFERIAQMVIVPIVQARFKRVEEFVGSSRGEGGFGSTGLH.

Residues 69-71, asparagine 82, 86-88, and lysine 96 each bind substrate; these read RSG and LID.

The protein belongs to the dUTPase family. Mg(2+) is required as a cofactor.

It catalyses the reaction dUTP + H2O = dUMP + diphosphate + H(+). It functions in the pathway pyrimidine metabolism; dUMP biosynthesis; dUMP from dCTP (dUTP route): step 2/2. Its function is as follows. This enzyme is involved in nucleotide metabolism: it produces dUMP, the immediate precursor of thymidine nucleotides and it decreases the intracellular concentration of dUTP so that uracil cannot be incorporated into DNA. The polypeptide is Deoxyuridine 5'-triphosphate nucleotidohydrolase (Neisseria meningitidis serogroup A / serotype 4A (strain DSM 15465 / Z2491)).